Here is a 74-residue protein sequence, read N- to C-terminus: uncharacterized protein (74 aa).

It localises to the mitochondrion. This is an uncharacterized protein from Marchantia polymorpha (Common liverwort).